Reading from the N-terminus, the 90-residue chain is Probable Fe(2+)-trafficking protein (90 aa).

It belongs to the Fe(2+)-trafficking protein family.

Functionally, could be a mediator in iron transactions between iron acquisition and iron-requiring processes, such as synthesis and/or repair of Fe-S clusters in biosynthetic enzymes. This Haemophilus influenzae (strain PittEE) protein is Probable Fe(2+)-trafficking protein.